We begin with the raw amino-acid sequence, 798 residues long: Galactinol--sucrose galactosyltransferase (798 aa).

It belongs to the glycosyl hydrolases 36 family.

The catalysed reaction is alpha-D-galactosyl-(1-&gt;3)-1D-myo-inositol + sucrose = raffinose + myo-inositol. Its activity is regulated as follows. Inhibited by 1-deoxygalactonojirimycin. Not inhibited by stachyose. Strong inhibition of the hydrolytic activity by sucrose. Functionally, transglycosidase operating by a ping-pong reaction mechanism. Involved in the synthesis of raffinose, a major soluble carbohydrate in seeds, roots and tubers. Able to utilize D-ononitol and D-pinitol as acceptors. May also act as a glycoside hydrolase. This chain is Galactinol--sucrose galactosyltransferase (RFS), found in Pisum sativum (Garden pea).